We begin with the raw amino-acid sequence, 505 residues long: T-cell activation GTPase-activating protein 1 (505 aa).

Disordered regions lie at residues 81 to 147 (DDSL…SESS), 160 to 212 (QQDR…DPFT), 242 to 293 (QGHI…QREI), 311 to 339 (RTSS…SQLS), and 414 to 441 (KPST…HRLS). Residues 90–102 (SDVSTLQNDSAYD) are compositionally biased toward polar residues. The segment covering 203–212 (EGDEAEDPFT) has biased composition (acidic residues). A compositionally biased stretch (low complexity) spans 250–262 (SRSSPGESLGSSP). Basic and acidic residues-rich tracts occupy residues 283 to 292 (KTDKTKPQRE) and 318 to 336 (EKSK…RKES).

This is T-cell activation GTPase-activating protein 1 (Tagap1) from Mus musculus (Mouse).